The primary structure comprises 105 residues: Replication initiation control protein YabA (105 aa).

Residues histidine 79, cysteine 81, cysteine 95, and cysteine 98 each contribute to the Zn(2+) site.

Belongs to the YabA family. In terms of assembly, homotetramer. Interacts with both DnaA and DnaN, acting as a bridge between these two proteins. Requires Zn(2+) as cofactor.

The protein localises to the cytoplasm. The protein resides in the nucleoid. Involved in control of chromosome replication initiation. Inhibits the cooperative binding of DnaA to the oriC region, thus negatively regulating initiation of chromosome replication. Inhibits the ability of DnaA-ATP to form a helix on DNA; does not disassemble preformed DnaA-DNA helices. Decreases the residence time of DnaA on the chromosome at its binding sites (oriC, replication forks and promoter-binding sites). Tethers DnaA to the replication machinery via the DNA polymerase beta sliding clamp subunit (dnaN). Associates with oriC and other DnaA targets on the chromosome in a DnaA-dependent manner. The chain is Replication initiation control protein YabA from Streptococcus sanguinis (strain SK36).